The following is a 361-amino-acid chain: Phospho-N-acetylmuramoyl-pentapeptide-transferase (361 aa).

Helical transmembrane passes span 25–45 (RGILAALTALFLSLWMGPAVI), 73–93 (TMGGSLILLTVTLSVLLWGDL), 98–118 (VWLVLAVMICFGAIGWYDDWI), 139–159 (IFGLAAGLFLYYTADVPAAIT), 168–188 (IALPLAGVSFVVIAYFWIVGF), 200–220 (GLAIMPTVLVACALGVFAYAS), 237–257 (AGELIIICSAIAGAGLGFLWF), 264–284 (VFMGDIGALSLGAVLGTIAVI), 289–309 (MVLVIMGGVFVIETLSVMIQV), and 339–359 (VIVRFWIISVVLVLIGLATLK).

This sequence belongs to the glycosyltransferase 4 family. MraY subfamily. It depends on Mg(2+) as a cofactor.

Its subcellular location is the cell inner membrane. It catalyses the reaction UDP-N-acetyl-alpha-D-muramoyl-L-alanyl-gamma-D-glutamyl-meso-2,6-diaminopimeloyl-D-alanyl-D-alanine + di-trans,octa-cis-undecaprenyl phosphate = di-trans,octa-cis-undecaprenyl diphospho-N-acetyl-alpha-D-muramoyl-L-alanyl-D-glutamyl-meso-2,6-diaminopimeloyl-D-alanyl-D-alanine + UMP. It participates in cell wall biogenesis; peptidoglycan biosynthesis. Functionally, catalyzes the initial step of the lipid cycle reactions in the biosynthesis of the cell wall peptidoglycan: transfers peptidoglycan precursor phospho-MurNAc-pentapeptide from UDP-MurNAc-pentapeptide onto the lipid carrier undecaprenyl phosphate, yielding undecaprenyl-pyrophosphoryl-MurNAc-pentapeptide, known as lipid I. This is Phospho-N-acetylmuramoyl-pentapeptide-transferase from Xanthomonas axonopodis pv. citri (strain 306).